The chain runs to 152 residues: Putative multi-protein-binding factor 1 (152 aa).

Positions 1–24 are disordered; that stretch reads MSDDWESKTVIGSRARVGGGGPRA. The region spanning 86-140 is the HTH cro/C1-type domain; it reads IIKGRSEKGLTQKELAVKINEKPQVVNDYESGRAQPNQQVLSKMERVLGIKLRGK. Residues 97-116 constitute a DNA-binding region (H-T-H motif); it reads QKELAVKINEKPQVVNDYES.

This sequence belongs to the MBF1 family.

Its function is as follows. Transcriptional coactivator that stimulates GCN4-dependent transcriptional activity by bridging the DNA-binding region of GCN4 and TBP (SPT15), thereby recruiting TBP to GCN4-bound promoters. Involved in induction of the ribosome quality control (RQC) pathway; a pathway that degrades nascent peptide chains during problematic translation. Required to prevent stalled ribosomes from frameshifting. The protein is Putative multi-protein-binding factor 1 (MBF1) of Yarrowia lipolytica (strain CLIB 122 / E 150) (Yeast).